The following is a 135-amino-acid chain: Small ribosomal subunit protein bS16m (135 aa).

Residues 1–34 (MVQLTTVLCKAYRGGHLTIRLALGGCTNRPFYRI) constitute a mitochondrion transit peptide. The residue at position 130 (threonine 130) is a Phosphothreonine.

It belongs to the bacterial ribosomal protein bS16 family. In terms of assembly, component of the mitochondrial ribosome small subunit (28S) which comprises a 12S rRNA and about 30 distinct proteins.

It localises to the mitochondrion. The sequence is that of Small ribosomal subunit protein bS16m (MRPS16) from Bos taurus (Bovine).